A 926-amino-acid polypeptide reads, in one-letter code: Peripheral plasma membrane protein CASK (926 aa).

The 265-residue stretch at 12-276 (YELCEVIGKG…VYEALNHPWL (265 aa)) folds into the Protein kinase domain. Residues 18–26 (IGKGPFSVV) and Lys41 each bind ATP. Residue Ser51 is modified to Phosphoserine. Asp141 is a catalytic residue. A phosphoserine; by autocatalysis mark is found at Ser151 and Ser155. Thr182 carries the post-translational modification Phosphothreonine. Phosphoserine occurs at positions 192 and 313. The segment at 305–315 (KGAVLAAVSSH) is calmodulin-binding. 2 L27 domains span residues 343 to 398 (AERA…SPQI) and 402 to 455 (PSDA…YSDE). The segment at 482-909 (MENVTRVRLV…DETIRHLEEA (428 aa)) is required for interaction with NRXN1 (via C-terminal tail). The region spanning 489–564 (RLVQFQKNTD…MLREMRGSIT (76 aa)) is the PDZ domain. 2 positions are modified to phosphoserine: Tyr571 and Ser577. A disordered region spans residues 574-610 (QSSSCERDSPSTSRQSPANGHSSTNNSVSDLPSTTQP). Residues 612 to 682 (GRQIYVRAQF…PSPELQEWRV (71 aa)) form the SH3 domain. Positions 739–911 (RKTLVLLGAH…TIRHLEEAVE (173 aa)) constitute a Guanylate kinase-like domain.

This sequence in the N-terminal section; belongs to the protein kinase superfamily. CAMK Ser/Thr protein kinase family. CaMK subfamily. Belongs to the MAGUK family. In terms of assembly, CASK and LIN7 form two mutually exclusive tripartite complexes with APBA1 or CASKIN1. Component of the brain-specific heterotrimeric complex (LIN-10-LIN-2-LIN-7 complex) composed of at least APBA1, CASK, and LIN7, which associates with the motor protein KIF17 to transport vesicles along microtubules. Forms a heterotrimeric complex with DLG1 and LIN7B via their L27 domains. Identified in a complex with ACTN4, IQGAP1, MAGI2, NPHS1, SPTAN1 and SPTBN1. Part of a complex containing CASK, TBR1 and TSPYL2. Interacts with WHRN. Interacts (via the PDZ, SH3 and guanylate kinase-like domains) with NRXN1 (via C-terminus). Interacts with CASKIN1, APBA1, LIN7(A/B/C) and L27 domain of DLG1 and isoform 2 of DLG4. Interacts with FCHSD2. Interacts with KIRREL3. Interacts with TBR1. Interacts with TSPYL2. The cofactor is Unlike other protein kinases, does not require a divalent cation such as magnesium for catalytic activity.. Ubiquitous. Expression is significantly greater in brain relative to kidney, lung, and liver and in fetal brain and kidney relative to lung and liver.

It localises to the nucleus. Its subcellular location is the cytoplasm. The protein localises to the cell membrane. The catalysed reaction is L-seryl-[protein] + ATP = O-phospho-L-seryl-[protein] + ADP + H(+). The enzyme catalyses L-threonyl-[protein] + ATP = O-phospho-L-threonyl-[protein] + ADP + H(+). Differs from archetypal CaMK members in that the kinase domain exhibits a constitutively active conformation and the autoinhibitory region does not engage in direct contact with the ATP-binding cleft, although it still binds Ca(2+)/CAM. Multidomain scaffolding Mg(2+)-independent protein kinase that catalyzes the phosphotransfer from ATP to proteins such as NRXN1, and plays a role in synaptic transmembrane protein anchoring and ion channel trafficking. Contributes to neural development and regulation of gene expression via interaction with the transcription factor TBR1. Binds to cell-surface proteins, including amyloid precursor protein, neurexins and syndecans. May mediate a link between the extracellular matrix and the actin cytoskeleton via its interaction with syndecan and with the actin/spectrin-binding protein 4.1. Component of the LIN-10-LIN-2-LIN-7 complex, which associates with the motor protein KIF17 to transport vesicles containing N-methyl-D-aspartate (NMDA) receptor subunit NR2B along microtubules. This chain is Peripheral plasma membrane protein CASK, found in Homo sapiens (Human).